We begin with the raw amino-acid sequence, 828 residues long: Beta-galactosidase (828 aa).

An N-terminal signal peptide occupies residues 1 to 20; that stretch reads MKMKQFNLLSLFLILITSFG. 2 N-linked (GlcNAc...) asparagine glycosylation sites follow: asparagine 23 and asparagine 153. The Proton donor role is filled by glutamate 183. Catalysis depends on glutamate 252, which acts as the Nucleophile. N-linked (GlcNAc...) asparagine glycosylation is found at asparagine 253, asparagine 350, asparagine 379, asparagine 492, asparagine 667, asparagine 799, and asparagine 803. Residues 742–828 form the SUEL-type lectin domain; sequence AHEHNKVELS…PKRLFVEVEC (87 aa).

The protein belongs to the glycosyl hydrolase 35 family.

The protein resides in the secreted. The protein localises to the extracellular space. It is found in the apoplast. It catalyses the reaction Hydrolysis of terminal non-reducing beta-D-galactose residues in beta-D-galactosides.. This chain is Beta-galactosidase, found in Brassica oleracea (Wild cabbage).